Consider the following 444-residue polypeptide: Trigger factor (444 aa).

In terms of domain architecture, PPIase FKBP-type spans 185 to 270; that stretch reads GDKLIIDFEG…VNEIQIAKDF (86 aa).

This sequence belongs to the FKBP-type PPIase family. Tig subfamily.

The protein resides in the cytoplasm. The enzyme catalyses [protein]-peptidylproline (omega=180) = [protein]-peptidylproline (omega=0). Functionally, involved in protein export. Acts as a chaperone by maintaining the newly synthesized protein in an open conformation. Functions as a peptidyl-prolyl cis-trans isomerase. In Wolbachia pipientis wMel, this protein is Trigger factor.